Reading from the N-terminus, the 127-residue chain is Putative iron-sulfur cluster insertion protein ErpA (127 aa).

Residues Met-1–Pro-14 show a composition bias toward polar residues. The interval Met-1–Thr-20 is disordered. Iron-sulfur cluster is bound by residues Cys-55, Cys-119, and Cys-121.

The protein belongs to the HesB/IscA family. Homodimer. The cofactor is iron-sulfur cluster.

Its function is as follows. Required for insertion of 4Fe-4S clusters. This Nitrosospira multiformis (strain ATCC 25196 / NCIMB 11849 / C 71) protein is Putative iron-sulfur cluster insertion protein ErpA.